The sequence spans 133 residues: DNA-binding protein StpA (133 aa).

Positions 81–115 (AMPRSAKKRQPRPAKYRFTDFNGEEKTWTGQGRTP) are disordered. The span at 85–95 (SAKKRQPRPAK) shows a compositional bias: basic residues. Residues 111–116 (QGRTPK) mediate DNA binding.

This sequence belongs to the histone-like protein H-NS family. In terms of assembly, forms homodimers, can interact with H-NS.

It localises to the cytoplasm. Its subcellular location is the nucleoid. In terms of biological role, a DNA-binding protein that acts in a fashion similar to H-NS, repressing gene transcription. A subset of H-NS/StpA-regulated genes require auxillary proteins for repression; these auxillary proteins (Hha and other similar proteins) may also modulate oligomerization of the H-NS/StpA complex. The polypeptide is DNA-binding protein StpA (stpA) (Salmonella typhi).